The sequence spans 349 residues: 3-dehydroquinate synthase (349 aa).

NAD(+)-binding positions include 63–68 (DGEDYK), 97–101 (GVIGD), 121–122 (TT), K134, K143, and 161–164 (FLQT). Residues E176, H235, and H252 each contribute to the Zn(2+) site.

The protein belongs to the sugar phosphate cyclases superfamily. Dehydroquinate synthase family. The cofactor is Co(2+). Zn(2+) is required as a cofactor. NAD(+) serves as cofactor.

The protein localises to the cytoplasm. The enzyme catalyses 7-phospho-2-dehydro-3-deoxy-D-arabino-heptonate = 3-dehydroquinate + phosphate. Its pathway is metabolic intermediate biosynthesis; chorismate biosynthesis; chorismate from D-erythrose 4-phosphate and phosphoenolpyruvate: step 2/7. Its function is as follows. Catalyzes the conversion of 3-deoxy-D-arabino-heptulosonate 7-phosphate (DAHP) to dehydroquinate (DHQ). This is 3-dehydroquinate synthase from Nitratiruptor sp. (strain SB155-2).